A 635-amino-acid polypeptide reads, in one-letter code: Dual specificity protein kinase zak2 (635 aa).

2 consecutive Protein kinase domains span residues W9 to I249 and N299 to F585. ATP contacts are provided by residues I15–R23 and K45. D124 functions as the Proton acceptor in the catalytic mechanism. Residues G305 to V313 and K326 each bind ATP. The Proton acceptor role is filled by D427.

It in the N-terminal section; belongs to the protein kinase superfamily. Ser/Thr protein kinase family. In the C-terminal section; belongs to the protein kinase superfamily. TKL Tyr protein kinase family. C-terminal tyrosine kinase domain is capable of autophosphorylation, in vitro. As to expression, zakA and zak2 are coexpressed in prestalk cell population, zakA is enriched in pstB populations and zak1 in pstA populations. ZakA and zak2 are coexpressed in prespore cells, zakA expression levels are 10 fold higher than zak2.

The enzyme catalyses L-seryl-[protein] + ATP = O-phospho-L-seryl-[protein] + ADP + H(+). It catalyses the reaction L-threonyl-[protein] + ATP = O-phospho-L-threonyl-[protein] + ADP + H(+). The catalysed reaction is L-tyrosyl-[protein] + ATP = O-phospho-L-tyrosyl-[protein] + ADP + H(+). Its function is as follows. Positive regulator of gsk3/gskA activity required for cell pattern formation and a downstream effector of carC. The kinases, gsk3/gskA, zakA and zak2, form part of a signaling pathway that responds to extracellular cyclic AMP. The pathway has a role in transcriptional regulation; required to direct prespore/spore fates during development. Zak2 negatively regulates prestalk differentiation by regulating expression of ecmA. Phosphorylates Y-214 of gsk3/gskA, in vitro. This chain is Dual specificity protein kinase zak2 (zak2), found in Dictyostelium discoideum (Social amoeba).